The primary structure comprises 506 residues: NAD(P)H-quinone oxidoreductase subunit 2 (506 aa).

The next 13 membrane-spanning stretches (helical) occupy residues 14–34, 42–62, 79–99, 108–128, 132–152, 167–187, 206–226, 240–260, 276–296, 302–322, 330–350, 374–394, and 409–429; these read AIIP…VDLA, WAPI…ALQW, LAIA…LISW, PIGE…LLCG, LISI…LSGY, LLVG…LYGL, FITS…IAAV, PTPV…AFAI, LLFT…ALAQ, MLAY…VSGT, VLYL…VILF, LGLS…GFFG, and LLVI…ISVI.

Belongs to the complex I subunit 2 family. NDH-1 can be composed of about 15 different subunits; different subcomplexes with different compositions have been identified which probably have different functions.

It localises to the cellular thylakoid membrane. The enzyme catalyses a plastoquinone + NADH + (n+1) H(+)(in) = a plastoquinol + NAD(+) + n H(+)(out). The catalysed reaction is a plastoquinone + NADPH + (n+1) H(+)(in) = a plastoquinol + NADP(+) + n H(+)(out). NDH-1 shuttles electrons from an unknown electron donor, via FMN and iron-sulfur (Fe-S) centers, to quinones in the respiratory and/or the photosynthetic chain. The immediate electron acceptor for the enzyme in this species is believed to be plastoquinone. Couples the redox reaction to proton translocation, and thus conserves the redox energy in a proton gradient. Cyanobacterial NDH-1 also plays a role in inorganic carbon-concentration. This is NAD(P)H-quinone oxidoreductase subunit 2 from Prochlorococcus marinus (strain MIT 9312).